Reading from the N-terminus, the 63-residue chain is Large ribosomal subunit protein bL28 (63 aa).

Belongs to the bacterial ribosomal protein bL28 family.

The sequence is that of Large ribosomal subunit protein bL28 from Desulfosudis oleivorans (strain DSM 6200 / JCM 39069 / Hxd3) (Desulfococcus oleovorans).